Reading from the N-terminus, the 323-residue chain is Putative divalent cation/proton antiporter TMEM165 (323 aa).

A signal peptide spans 1 to 33; that stretch reads MAAAARGSGRAPTRRLLVLLLLQLLWAPAGVRA. Over 34 to 89 the chain is Lumenal; the sequence is GPEEDLSHRNQEPPAPAQQLQPQPAAVQGLEPARAEKGLTPVAPVHTNKEDAAAQT. Residues 35 to 44 are compositionally biased toward basic and acidic residues; that stretch reads PEEDLSHRNQ. Residues 35 to 60 form a disordered region; that stretch reads PEEDLSHRNQEPPAPAQQLQPQPAAV. The span at 50-59 shows a compositional bias: low complexity; it reads AQQLQPQPAA. A helical transmembrane segment spans residues 90–110; the sequence is NLGFIHAFVAAISVIIVSELG. Residues 111-126 lie on the Cytoplasmic side of the membrane; the sequence is DKTFFIAAIMAMRYNR. The helical transmembrane segment at 127 to 147 threads the bilayer; the sequence is LTVLAGAMLALALMTCLSVLF. Residues 148–151 are Lumenal-facing; it reads GYAT. The helical transmembrane segment at 152-172 threads the bilayer; the sequence is TVIPRVYTYYVSTALFAIFGI. Topologically, residues 173–227 are cytoplasmic; it reads RMLREGLKMSPDEGQEELEEVQAELKKKDEEFQRTKLLNGPDVETGTSTAIPQKK. Residues 184 to 211 are a coiled coil; the sequence is DEGQEELEEVQAELKKKDEEFQRTKLLN. The chain crosses the membrane as a helical span at residues 228–248; that stretch reads WLHFISPIFVQALTLTFLAEW. The Lumenal segment spans residues 249–266; it reads GDRSQLTTIVLAAREDPY. A helical membrane pass occupies residues 267–287; the sequence is GVAVGGTVGHCLCTGLAVIGG. Over 288 to 298 the chain is Cytoplasmic; it reads RMIAQKISVRT. A helical transmembrane segment spans residues 299-319; it reads VTIIGGIVFLAFAFSALFISP. Residues 320–323 are Lumenal-facing; the sequence is ESGF.

This sequence belongs to the GDT1 family. In terms of tissue distribution, expressed in mammary epithelial cells (at protein level).

It is found in the golgi apparatus membrane. The catalysed reaction is Ca(2+)(in) + n H(+)(out) = Ca(2+)(out) + n H(+)(in). The enzyme catalyses Mn(2+)(in) + n H(+)(out) = Mn(2+)(out) + n H(+)(in). Its function is as follows. Putative divalent cation:proton antiporter that exchanges calcium or manganese ions for protons across the Golgi membrane. Mediates the reversible transport of calcium or manganese to the Golgi lumen driven by the proton gradient and possibly the membrane potential generated by V-ATPase. Provides calcium or manganese cofactors to resident Golgi enzymes and contributes to the maintenance of an acidic luminal Golgi pH required for proper functioning of the secretory pathway. Promotes Ca(2+) storage within the Golgi lumen of the mammary epithelial cells to be then secreted into milk. The transport mechanism and stoichiometry remains to be elucidated. In Mus musculus (Mouse), this protein is Putative divalent cation/proton antiporter TMEM165.